A 649-amino-acid polypeptide reads, in one-letter code: Beta-galactosidase-1-like protein 3 (649 aa).

Glu-203 functions as the Proton donor in the catalytic mechanism. Glu-277 acts as the Nucleophile in catalysis.

The protein belongs to the glycosyl hydrolase 35 family.

This Mus musculus (Mouse) protein is Beta-galactosidase-1-like protein 3 (Glb1l3).